Here is a 421-residue protein sequence, read N- to C-terminus: L-Ala-D/L-amino acid epimerase (421 aa).

Residues threonine 193 and 218–220 (KLK) contribute to the substrate site. Aspartate 247, glutamate 275, and aspartate 304 together coordinate Mg(2+). Residues lysine 328 and 380–382 (DLD) each bind substrate.

Belongs to the mandelate racemase/muconate lactonizing enzyme family. Mg(2+) is required as a cofactor.

Catalyzes the epimerization of various hydrophobic and polar dipeptides. Has epimerase activity with L-Ala-L-Ala, L-Ala-L-Ser, L-Ala-L-Thr and L-Ala-L-Trp (in vitro). In Populus trichocarpa (Western balsam poplar), this protein is L-Ala-D/L-amino acid epimerase.